A 392-amino-acid polypeptide reads, in one-letter code: Retrovirus-related Pol polyprotein from type-1 retrotransposable element R1 4 (392 aa).

The region spanning Pro-1–Glu-230 is the Reverse transcriptase domain. Positions Gly-231–Glu-392 are nucleic acid-binding endonuclease.

It carries out the reaction DNA(n) + a 2'-deoxyribonucleoside 5'-triphosphate = DNA(n+1) + diphosphate. The polypeptide is Retrovirus-related Pol polyprotein from type-1 retrotransposable element R1 4 (Nasonia vitripennis (Parasitic wasp)).